The primary structure comprises 765 residues: AMP deaminase 3 (765 aa).

Phosphoserine occurs at positions 85 and 106. Residues H315 and H317 each coordinate Zn(2+). Substrate is bound by residues H317 and 386–391 (KFNSKY). H584 lines the Zn(2+) pocket. E587 lines the substrate pocket. H606 acts as the Proton acceptor in catalysis. D661 contacts Zn(2+). 662–665 (DPMQ) provides a ligand contact to substrate.

It belongs to the metallo-dependent hydrolases superfamily. Adenosine and AMP deaminases family. In terms of assembly, homotetramer. It depends on Zn(2+) as a cofactor. As to expression, expressed in adult tissues such as aorta, heart, kidney, lung, muscle and thyroid. Weakly expressed in thyroid and not detected in liver.

The catalysed reaction is AMP + H2O + H(+) = IMP + NH4(+). It functions in the pathway purine metabolism; IMP biosynthesis via salvage pathway; IMP from AMP: step 1/1. AMP deaminase plays a critical role in energy metabolism. The polypeptide is AMP deaminase 3 (Rattus norvegicus (Rat)).